The chain runs to 147 residues: uncharacterized protein (147 aa).

Residues 52–145 (YDRCLLIIDA…WLSNNYPTVC (94 aa)) enclose the Rhodanese domain.

This is an uncharacterized protein from Buchnera aphidicola subsp. Baizongia pistaciae (strain Bp).